A 69-amino-acid polypeptide reads, in one-letter code: Large ribosomal subunit protein bL31 (69 aa).

Residues Cys-16, Cys-18, Cys-37, and Cys-40 each coordinate Zn(2+).

This sequence belongs to the bacterial ribosomal protein bL31 family. Type A subfamily. Part of the 50S ribosomal subunit. Zn(2+) serves as cofactor.

Binds the 23S rRNA. In Teredinibacter turnerae (strain ATCC 39867 / T7901), this protein is Large ribosomal subunit protein bL31.